The sequence spans 2242 residues: Transcription factor sma-9 (2242 aa).

Residues 120 to 383 (HQLAQQQAQQ…QQAQQAQLAQ (264 aa)) are a coiled coil. Residues 317 to 330 (AAQQAQAQNNASQQ) show a composition bias toward low complexity. Disordered stretches follow at residues 317–344 (AAQQAQAQNNASQQRPSVASTPALSSTP), 494–553 (TPVA…SMSD), 583–617 (GAQSSVDHDSNSGGSTRTSPGPKDSRMLQAASRSQ), 712–754 (LAAH…SSFP), and 1323–1349 (EDSTSAEPSTSGQSLLMRSPRPQSPPL). A compositionally biased stretch (polar residues) spans 331 to 344 (RPSVASTPALSSTP). 2 stretches are compositionally biased toward low complexity: residues 494–523 (TPVAVPPMKQNSNPSMNPSSTSTSASATSS) and 539–550 (SSSKAASSGNES). The span at 583–601 (GAQSSVDHDSNSGGSTRTS) shows a compositional bias: polar residues. Over residues 1324 to 1338 (DSTSAEPSTSGQSLL) the composition is skewed to polar residues. C2H2-type zinc fingers lie at residues 1447–1469 (YICDRCGIRCKKPSMLKKHIKSH), 1475–1499 (FNCTACNFSFKTKGNLTKHLSSKTH), 1700–1722 (LKCDQCDRTFRKISDLTLHQHTH), 1734–1760 (YQCSECKIPIRTKAQLQKHLERNHGVH), and 1790–1814 (FMCVDCDIGFRKHGILAKHLRSKTH). Low complexity predominate over residues 2029–2039 (SITSPIVSSST). Disordered stretches follow at residues 2029-2059 (SITSPIVSSSTNFSYRKRSESSLSGSSPTHT) and 2085-2107 (STDKAHASESLSDRLHNKRPRPI). Basic and acidic residues predominate over residues 2085–2099 (STDKAHASESLSDRL). C2H2-type zinc fingers lie at residues 2111-2134 (TKCQICADEFSTPIELQVHLHVDH) and 2143-2167 (YKCPRKFCGLNYESLDSLRAHVTAH). Residues 2219 to 2242 (HELYAQTQQGAGSSTSNQSPKAAN) are disordered. A compositionally biased stretch (polar residues) spans 2223–2242 (AQTQQGAGSSTSNQSPKAAN).

As to expression, expressed in the ventral nerve cord (VNC), pharynx, intestine and seam cells (at protein level).

The protein resides in the nucleus. Functionally, transcription factor, probably acting as a transcriptional activator and repressor, involved in the TGF-beta-like dbl-1 signaling pathway. Plays a role in regulation of body size, and patterning of male-specific genital sensilla (simple sense organs), known as rays, and mating-associated structures, spicules. Required for the dorsoventral patterning of the postembryonic mesodermal lineage (M lineage), acting by antagonizing the TGF-beta-like dbl-1 signaling pathway, in part by repressing expression of transcription factor unc-130. Involved in egg-laying, perhaps via modulation of cholinergic neurotransmission. Involved in production of reactive oxygen species (ROS), acting downstream of the dbl-1 signaling pathway. Plays a role in the mitochondrial unfolded protein response (mtUPR). May play a role in modulating lifespan and in responses to proteotoxic stress. Its function is as follows. Transcription factor, probably acting as a transcriptional activator. Required for patterning of male-specific genital sensilla (simple sense organs), known as rays. Dispensable for regulation of body size. In Caenorhabditis elegans, this protein is Transcription factor sma-9.